A 204-amino-acid polypeptide reads, in one-letter code: Protein GET1 (204 aa).

Residues 1–4 (MPSL) are Lumenal-facing. A helical transmembrane segment spans residues 5–24 (LLIIFVTELVVQLVNTLGAT). The Cytoplasmic portion of the chain corresponds to 25 to 110 (TINDLLWRIY…KFDRTLTTTR (86 aa)). Residues 72 to 107 (AKWAKLRRQHDKLLEDLEKKKASLEAARTKFDRTLT) are a coiled coil. A helical transmembrane segment spans residues 111–131 (TVSTRSVQWFLPFWYSKEPMF). Residues 132–155 (WLPYGWFPYYVEWFASFPRAPMGS) are Lumenal-facing. The helical transmembrane segment at 156–172 (VSIVVWQWACTAVIALM) threads the bilayer. Over 173-204 (IEAATAALVYVAAKQSQKIRQPVPAQSEKKDS) the chain is Cytoplasmic.

The protein belongs to the WRB/GET1 family. Interacts with GET3.

The protein resides in the endoplasmic reticulum membrane. In terms of biological role, required for the post-translational delivery of tail-anchored (TA) proteins to the endoplasmic reticulum. Acts as a membrane receptor for soluble GET3, which recognizes and selectively binds the transmembrane domain of TA proteins in the cytosol. This is Protein GET1 from Podospora anserina (strain S / ATCC MYA-4624 / DSM 980 / FGSC 10383) (Pleurage anserina).